Reading from the N-terminus, the 146-residue chain is Large ribosomal subunit protein uL15 (146 aa).

Residues 1–64 (MQLNTIKPAI…MPMHRRLPKR (64 aa)) are disordered. The segment covering 30–39 (TATKGHKGQK) has biased composition (basic residues).

Belongs to the universal ribosomal protein uL15 family. Part of the 50S ribosomal subunit.

Its function is as follows. Binds to the 23S rRNA. This Geobacter sp. (strain M21) protein is Large ribosomal subunit protein uL15.